Reading from the N-terminus, the 156-residue chain is ATP synthase subunit b (156 aa).

The chain crosses the membrane as a helical span at residues Ala-11–Ala-31.

Belongs to the ATPase B chain family. F-type ATPases have 2 components, F(1) - the catalytic core - and F(0) - the membrane proton channel. F(1) has five subunits: alpha(3), beta(3), gamma(1), delta(1), epsilon(1). F(0) has three main subunits: a(1), b(2) and c(10-14). The alpha and beta chains form an alternating ring which encloses part of the gamma chain. F(1) is attached to F(0) by a central stalk formed by the gamma and epsilon chains, while a peripheral stalk is formed by the delta and b chains.

It localises to the cell inner membrane. In terms of biological role, f(1)F(0) ATP synthase produces ATP from ADP in the presence of a proton or sodium gradient. F-type ATPases consist of two structural domains, F(1) containing the extramembraneous catalytic core and F(0) containing the membrane proton channel, linked together by a central stalk and a peripheral stalk. During catalysis, ATP synthesis in the catalytic domain of F(1) is coupled via a rotary mechanism of the central stalk subunits to proton translocation. Its function is as follows. Component of the F(0) channel, it forms part of the peripheral stalk, linking F(1) to F(0). The chain is ATP synthase subunit b from Enterobacter sp. (strain 638).